The primary structure comprises 639 residues: Threonine--tRNA ligase (639 aa).

In terms of domain architecture, TGS spans 1–61 (MIHITLPDGS…TQDSPLSIVT (61 aa)). Residues 242 to 533 (DHRKLGRELD…LIEEHAGALP (292 aa)) form a catalytic region. Zn(2+) is bound by residues Cys333, His384, and His510.

It belongs to the class-II aminoacyl-tRNA synthetase family. As to quaternary structure, homodimer. It depends on Zn(2+) as a cofactor.

The protein localises to the cytoplasm. The catalysed reaction is tRNA(Thr) + L-threonine + ATP = L-threonyl-tRNA(Thr) + AMP + diphosphate + H(+). Its function is as follows. Catalyzes the attachment of threonine to tRNA(Thr) in a two-step reaction: L-threonine is first activated by ATP to form Thr-AMP and then transferred to the acceptor end of tRNA(Thr). Also edits incorrectly charged L-seryl-tRNA(Thr). This Acidovorax ebreus (strain TPSY) (Diaphorobacter sp. (strain TPSY)) protein is Threonine--tRNA ligase.